We begin with the raw amino-acid sequence, 171 residues long: Co-chaperone protein HscB homolog (171 aa).

A J domain is found at 2–74; it reads NYFELFGLPI…LRRAEYLLSL (73 aa).

This sequence belongs to the HscB family. Interacts with HscA and stimulates its ATPase activity.

Functionally, co-chaperone involved in the maturation of iron-sulfur cluster-containing proteins. Seems to help targeting proteins to be folded toward HscA. This chain is Co-chaperone protein HscB homolog, found in Vibrio cholerae serotype O1 (strain M66-2).